The following is a 432-amino-acid chain: Adenylosuccinate synthetase (432 aa).

Residues 12-18 and 40-42 each bind GTP; these read GDEGKGK and GHT. Aspartate 13 functions as the Proton acceptor in the catalytic mechanism. Aspartate 13 and glycine 40 together coordinate Mg(2+). IMP is bound by residues 13-16, 38-41, threonine 130, arginine 144, glutamine 226, threonine 241, and arginine 305; these read DEGK and NAGH. Histidine 41 acts as the Proton donor in catalysis. Residue 301–307 participates in substrate binding; that stretch reads STTGRSR. GTP contacts are provided by residues arginine 307, 333–335, and 415–417; these read KLD and SVG.

Belongs to the adenylosuccinate synthetase family. In terms of assembly, homodimer. Requires Mg(2+) as cofactor.

It localises to the cytoplasm. It catalyses the reaction IMP + L-aspartate + GTP = N(6)-(1,2-dicarboxyethyl)-AMP + GDP + phosphate + 2 H(+). The protein operates within purine metabolism; AMP biosynthesis via de novo pathway; AMP from IMP: step 1/2. Functionally, plays an important role in the de novo pathway of purine nucleotide biosynthesis. Catalyzes the first committed step in the biosynthesis of AMP from IMP. In Bdellovibrio bacteriovorus (strain ATCC 15356 / DSM 50701 / NCIMB 9529 / HD100), this protein is Adenylosuccinate synthetase.